A 296-amino-acid chain; its full sequence is Nitrogenase iron protein (296 aa).

ATP is bound at residue 10 to 17; it reads GKGGIGKS. Residue Cys98 coordinates [4Fe-4S] cluster. Arg101 is subject to ADP-ribosylarginine; by dinitrogenase reductase ADP-ribosyltransferase. Residue Cys133 participates in [4Fe-4S] cluster binding.

Belongs to the NifH/BchL/ChlL family. In terms of assembly, homodimer. [4Fe-4S] cluster is required as a cofactor. The reversible ADP-ribosylation of Arg-101 inactivates the nitrogenase reductase and regulates nitrogenase activity.

The enzyme catalyses N2 + 8 reduced [2Fe-2S]-[ferredoxin] + 16 ATP + 16 H2O = H2 + 8 oxidized [2Fe-2S]-[ferredoxin] + 2 NH4(+) + 16 ADP + 16 phosphate + 6 H(+). The key enzymatic reactions in nitrogen fixation are catalyzed by the nitrogenase complex, which has 2 components: the iron protein and the molybdenum-iron protein. This chain is Nitrogenase iron protein, found in Magnetococcus marinus (strain ATCC BAA-1437 / JCM 17883 / MC-1).